Reading from the N-terminus, the 440-residue chain is Glutamyl-tRNA reductase (440 aa).

Substrate contacts are provided by residues 55 to 58 (TCNR), Ser-115, 120 to 122 (ETQ), and Gln-126. The active-site Nucleophile is Cys-56. Residue 199 to 204 (GSGEMG) coordinates NADP(+).

It belongs to the glutamyl-tRNA reductase family. As to quaternary structure, homodimer.

The enzyme catalyses (S)-4-amino-5-oxopentanoate + tRNA(Glu) + NADP(+) = L-glutamyl-tRNA(Glu) + NADPH + H(+). Its pathway is porphyrin-containing compound metabolism; protoporphyrin-IX biosynthesis; 5-aminolevulinate from L-glutamyl-tRNA(Glu): step 1/2. In terms of biological role, catalyzes the NADPH-dependent reduction of glutamyl-tRNA(Glu) to glutamate 1-semialdehyde (GSA). This is Glutamyl-tRNA reductase from Helicobacter hepaticus (strain ATCC 51449 / 3B1).